The primary structure comprises 211 residues: Nucleoside triphosphate pyrophosphatase (211 aa).

The active-site Proton acceptor is the D78.

The protein belongs to the Maf family. Requires a divalent metal cation as cofactor.

It localises to the cytoplasm. It carries out the reaction a ribonucleoside 5'-triphosphate + H2O = a ribonucleoside 5'-phosphate + diphosphate + H(+). The enzyme catalyses a 2'-deoxyribonucleoside 5'-triphosphate + H2O = a 2'-deoxyribonucleoside 5'-phosphate + diphosphate + H(+). In terms of biological role, nucleoside triphosphate pyrophosphatase. May have a dual role in cell division arrest and in preventing the incorporation of modified nucleotides into cellular nucleic acids. The chain is Nucleoside triphosphate pyrophosphatase from Mycolicibacterium smegmatis (strain ATCC 700084 / mc(2)155) (Mycobacterium smegmatis).